A 415-amino-acid chain; its full sequence is Acetyl-CoA acetyltransferase 1 (415 aa).

C99 serves as the catalytic Acyl-thioester intermediate. K239 serves as a coordination point for CoA. A256 provides a ligand contact to K(+). S260 provides a ligand contact to CoA. Residue V357 participates in K(+) binding. Catalysis depends on proton acceptor residues H361 and C391.

Belongs to the thiolase-like superfamily. Thiolase family. Expressed in the vascular system of roots, cotyledons, young leaves, fully expanded leaves, stems, flowers, and funiculi of siliques.

The protein resides in the cytoplasm. The protein localises to the peroxisome. It catalyses the reaction 2 acetyl-CoA = acetoacetyl-CoA + CoA. It participates in metabolic intermediate biosynthesis; (R)-mevalonate biosynthesis; (R)-mevalonate from acetyl-CoA: step 1/3. Functionally, catalyzes the condensation of two molecules of acetyl-CoA to produce acetoacetyl-CoA. This Arabidopsis thaliana (Mouse-ear cress) protein is Acetyl-CoA acetyltransferase 1.